The following is a 174-amino-acid chain: Male-enhanced antigen 1 (174 aa).

2 disordered regions span residues 1-77 and 94-123; these read MAAV…PVGD and LHLP…IPMD. 3 stretches are compositionally biased toward acidic residues: residues 38–48, 65–77, and 101–110; these read SSEEPEEEQEE, PEQE…PVGD, and LESEDEDEEG. At S103 the chain carries Phosphoserine.

May play an important role in spermatogenesis and/or testis development. The polypeptide is Male-enhanced antigen 1 (MEA1) (Sus scrofa (Pig)).